Consider the following 337-residue polypeptide: Phosphate acyltransferase (337 aa).

The protein belongs to the PlsX family. In terms of assembly, homodimer. Probably interacts with PlsY.

It localises to the cytoplasm. It catalyses the reaction a fatty acyl-[ACP] + phosphate = an acyl phosphate + holo-[ACP]. The protein operates within lipid metabolism; phospholipid metabolism. Its function is as follows. Catalyzes the reversible formation of acyl-phosphate (acyl-PO(4)) from acyl-[acyl-carrier-protein] (acyl-ACP). This enzyme utilizes acyl-ACP as fatty acyl donor, but not acyl-CoA. The sequence is that of Phosphate acyltransferase from Hydrogenovibrio crunogenus (strain DSM 25203 / XCL-2) (Thiomicrospira crunogena).